The chain runs to 446 residues: tRNA-2-methylthio-N(6)-dimethylallyladenosine synthase (446 aa).

An MTTase N-terminal domain is found at 5-121 (KYLYVETFGC…LPEIVRAAER (117 aa)). The [4Fe-4S] cluster site is built by C14, C50, C84, C159, C163, and C166. The Radical SAM core domain maps to 145 to 375 (GEGGVTRFVT…QTLQQQMKRE (231 aa)). Positions 378–440 (ISFVGTRQLV…QNSLLGEIVT (63 aa)) constitute a TRAM domain.

This sequence belongs to the methylthiotransferase family. MiaB subfamily. As to quaternary structure, monomer. The cofactor is [4Fe-4S] cluster.

The protein resides in the cytoplasm. The catalysed reaction is N(6)-dimethylallyladenosine(37) in tRNA + (sulfur carrier)-SH + AH2 + 2 S-adenosyl-L-methionine = 2-methylsulfanyl-N(6)-dimethylallyladenosine(37) in tRNA + (sulfur carrier)-H + 5'-deoxyadenosine + L-methionine + A + S-adenosyl-L-homocysteine + 2 H(+). In terms of biological role, catalyzes the methylthiolation of N6-(dimethylallyl)adenosine (i(6)A), leading to the formation of 2-methylthio-N6-(dimethylallyl)adenosine (ms(2)i(6)A) at position 37 in tRNAs that read codons beginning with uridine. This chain is tRNA-2-methylthio-N(6)-dimethylallyladenosine synthase, found in Geobacter sulfurreducens (strain ATCC 51573 / DSM 12127 / PCA).